A 444-amino-acid polypeptide reads, in one-letter code: Amino-acid acetyltransferase (444 aa).

Residues glutamate 295–serine 434 form the N-acetyltransferase domain.

Belongs to the acetyltransferase family. ArgA subfamily. In terms of assembly, homohexamer.

The protein localises to the cytoplasm. It carries out the reaction L-glutamate + acetyl-CoA = N-acetyl-L-glutamate + CoA + H(+). It participates in amino-acid biosynthesis; L-arginine biosynthesis; N(2)-acetyl-L-ornithine from L-glutamate: step 1/4. The polypeptide is Amino-acid acetyltransferase (Proteus mirabilis (strain HI4320)).